The primary structure comprises 67 residues: DNA-directed RNA polymerase subunit omega (67 aa).

It belongs to the RNA polymerase subunit omega family. As to quaternary structure, the RNAP catalytic core consists of 2 alpha, 1 beta, 1 beta' and 1 omega subunit. When a sigma factor is associated with the core the holoenzyme is formed, which can initiate transcription.

The enzyme catalyses RNA(n) + a ribonucleoside 5'-triphosphate = RNA(n+1) + diphosphate. Its function is as follows. Promotes RNA polymerase assembly. Latches the N- and C-terminal regions of the beta' subunit thereby facilitating its interaction with the beta and alpha subunits. The protein is DNA-directed RNA polymerase subunit omega of Listeria welshimeri serovar 6b (strain ATCC 35897 / DSM 20650 / CCUG 15529 / CIP 8149 / NCTC 11857 / SLCC 5334 / V8).